The primary structure comprises 377 residues: Protein-tyrosine sulfotransferase 2 (377 aa).

Over 1–8 the chain is Cytoplasmic; it reads MRLSVRRV. Residues 9-25 traverse the membrane as a helical; Signal-anchor for type II membrane protein segment; the sequence is LLAAGCALVLVLAVQLG. Residues 26–377 are Lumenal-facing; sequence QQVLECRAVL…NSTSSHLGSS (352 aa). 3'-phosphoadenylyl sulfate is bound at residue 78-82; the sequence is RSGTT. C96 and C156 are oxidised to a cystine. The active-site Proton donor/acceptor is E99. The segment at 101–105 is interaction with peptide substrate; that stretch reads RIIPR. R183, S191, and R195 together coordinate 3'-phosphoadenylyl sulfate. A disulfide bridge links C225 with C233. Residues Y238, 285–294, and K300 each bind 3'-phosphoadenylyl sulfate; that span reads STDQVIKPVN. 2 N-linked (GlcNAc...) asparagine glycosylation sites follow: N343 and N368.

It belongs to the protein sulfotransferase family. Homodimer. Can also form heterodimers with TPST1. Post-translationally, N-glycosylated. In terms of tissue distribution, widely expressed.

The protein resides in the golgi apparatus membrane. The catalysed reaction is L-tyrosyl-[protein] + 3'-phosphoadenylyl sulfate = O-sulfo-L-tyrosine-[protein] + adenosine 3',5'-bisphosphate + H(+). Catalyzes the O-sulfation of tyrosine residues within acidic motifs of polypeptides, using 3'-phosphoadenylyl sulfate (PAPS) as cosubstrate. The polypeptide is Protein-tyrosine sulfotransferase 2 (TPST2) (Homo sapiens (Human)).